The chain runs to 129 residues: Small ribosomal subunit protein uS9 (129 aa).

It belongs to the universal ribosomal protein uS9 family.

This Nitratiruptor sp. (strain SB155-2) protein is Small ribosomal subunit protein uS9.